Consider the following 417-residue polypeptide: Hydroxysqualene dehydroxylase (417 aa).

It belongs to the HpnE family.

It carries out the reaction squalene + FAD + H2O + H(+) = hydroxysqualene + FADH2. Its pathway is secondary metabolite biosynthesis; hopanoid biosynthesis. Involved in the biosynthesis of the hopanoid precursor squalene (SQ) from farnesyl diphosphate (FPP). Catalyzes the third (last) step, the reduction of hydroxysqualene (HSQ) to SQ. The protein is Hydroxysqualene dehydroxylase of Sinorhizobium fredii (strain NBRC 101917 / NGR234).